The following is a 477-amino-acid chain: Cytoplasmic 60S subunit biogenesis factor ZNF622 (477 aa).

The residue at position 2 (Ala2) is an N-acetylalanine. 2 consecutive U1-type zinc fingers follow at residues 4 to 28 (YTCI…TDWH) and 67 to 91 (TYCT…SRRH). Residues 135 to 212 (AIKAQPSMSP…EDLDGDDWED (78 aa)) form a disordered region. Residues 167 to 178 (GTHDRDPSEKPP) are compositionally biased toward basic and acidic residues. The segment covering 196-212 (EDSEEEEEDLDGDDWED) has biased composition (acidic residues). Ser276 bears the Phosphoserine mark.

The protein belongs to the REI1 family. Homo- and heterodimer. Associates with pre-60S ribosomal particles. Interacts with MELK and MYBL2. Interacts with DNAJC21. Phosphorylated by MELK. The phosphorylation may redirect the protein to the nucleus. In terms of processing, ubiquitinated by HECTD1, leading to its degradation. Expressed in lung, kidney, spleen, liver and brain with lowest expression in kidney.

It localises to the cytoplasm. The protein localises to the nucleus. Pre-60S-associated cytoplasmic factor involved in the cytoplasmic maturation of the 60S subunit. This chain is Cytoplasmic 60S subunit biogenesis factor ZNF622, found in Homo sapiens (Human).